The following is a 359-amino-acid chain: 3-dehydroquinate synthase (359 aa).

NAD(+) is bound by residues 69–74 (DAEDGK), 103–107 (GAVTD), 127–128 (TT), Lys-140, and Lys-149. Zn(2+)-binding residues include Glu-182, His-244, and His-260.

Belongs to the sugar phosphate cyclases superfamily. Dehydroquinate synthase family. It depends on NAD(+) as a cofactor. Co(2+) serves as cofactor. The cofactor is Zn(2+).

Its subcellular location is the cytoplasm. It catalyses the reaction 7-phospho-2-dehydro-3-deoxy-D-arabino-heptonate = 3-dehydroquinate + phosphate. The protein operates within metabolic intermediate biosynthesis; chorismate biosynthesis; chorismate from D-erythrose 4-phosphate and phosphoenolpyruvate: step 2/7. Its function is as follows. Catalyzes the conversion of 3-deoxy-D-arabino-heptulosonate 7-phosphate (DAHP) to dehydroquinate (DHQ). The polypeptide is 3-dehydroquinate synthase (Corynebacterium pseudotuberculosis (strain C231)).